Here is a 306-residue protein sequence, read N- to C-terminus: Homeobox protein CUP9 (306 aa).

Residues 75-123 (PAINSGGTSTTATPTASTVETSKTSSSAMDTQSQYGSSKKSKSASDDAK) form a disordered region. Residues 79-96 (SGGTSTTATPTASTVETS) are compositionally biased toward low complexity. The span at 97–110 (KTSSSAMDTQSQYG) shows a compositional bias: polar residues. The segment at residues 162-224 (NSGRRSNLPK…NVRRRKIFSD (63 aa)) is a DNA-binding region (homeobox; TALE-type).

The protein belongs to the TALE/CUP9 homeobox family.

The protein localises to the nucleus. In terms of biological role, probable DNA-binding protein which plays a role in protecting yeast cells against copper toxicity. May regulate the expression of important copper homeostatic genes. In Saccharomyces cerevisiae (strain ATCC 204508 / S288c) (Baker's yeast), this protein is Homeobox protein CUP9 (CUP9).